Here is a 115-residue protein sequence, read N- to C-terminus: Large ribosomal subunit protein bL19 (115 aa).

The protein belongs to the bacterial ribosomal protein bL19 family.

This protein is located at the 30S-50S ribosomal subunit interface and may play a role in the structure and function of the aminoacyl-tRNA binding site. This is Large ribosomal subunit protein bL19 from Yersinia pseudotuberculosis serotype O:1b (strain IP 31758).